The primary structure comprises 185 residues: Stathmin-4 (185 aa).

Residues 48-185 (SDMEVIELNK…EVRKNKEATR (138 aa)) form the SLD domain. Residues 90–185 (SLEEIQKKLE…EVRKNKEATR (96 aa)) adopt a coiled-coil conformation. The disordered stretch occupies residues 165 to 185 (ERLQEKDKHAEEVRKNKEATR). Positions 166–185 (RLQEKDKHAEEVRKNKEATR) are enriched in basic and acidic residues.

Belongs to the stathmin family. In terms of tissue distribution, nervous tissue.

The polypeptide is Stathmin-4 (stmn4) (Xenopus laevis (African clawed frog)).